The chain runs to 858 residues: Leucine--tRNA ligase (858 aa).

Positions P42–H52 match the 'HIGH' region motif. The short motif at K618–S622 is the 'KMSKS' region element. K621 contributes to the ATP binding site.

The protein belongs to the class-I aminoacyl-tRNA synthetase family.

The protein localises to the cytoplasm. The catalysed reaction is tRNA(Leu) + L-leucine + ATP = L-leucyl-tRNA(Leu) + AMP + diphosphate. The polypeptide is Leucine--tRNA ligase (Vibrio atlanticus (strain LGP32) (Vibrio splendidus (strain Mel32))).